The sequence spans 127 residues: Glycine cleavage system H protein (127 aa).

One can recognise a Lipoyl-binding domain in the interval 24–105 (TALVGITDFA…YEDGWMVKVS (82 aa)). Lys-65 bears the N6-lipoyllysine mark.

It belongs to the GcvH family. The glycine cleavage system is composed of four proteins: P, T, L and H. Requires (R)-lipoate as cofactor.

Functionally, the glycine cleavage system catalyzes the degradation of glycine. The H protein shuttles the methylamine group of glycine from the P protein to the T protein. This is Glycine cleavage system H protein from Prosthecochloris aestuarii (strain DSM 271 / SK 413).